The chain runs to 201 residues: Molybdenum cofactor guanylyltransferase (201 aa).

Residues 14–16 (LAG), K31, and D104 contribute to the GTP site. D104 provides a ligand contact to Mg(2+).

It belongs to the MobA family. In terms of assembly, monomer. It depends on Mg(2+) as a cofactor.

It is found in the cytoplasm. It carries out the reaction Mo-molybdopterin + GTP + H(+) = Mo-molybdopterin guanine dinucleotide + diphosphate. Functionally, transfers a GMP moiety from GTP to Mo-molybdopterin (Mo-MPT) cofactor (Moco or molybdenum cofactor) to form Mo-molybdopterin guanine dinucleotide (Mo-MGD) cofactor. The chain is Molybdenum cofactor guanylyltransferase from Helicobacter pylori (strain G27).